The primary structure comprises 452 residues: MSLMQFSGLLVVWLLSTLFIATLTWFEFRRVRFNFNVFFSLLFLLTFFFGFPLTSVLVFRFDVGVAPPEILLQALLSAACFYGVYYVTYKTRLRKRVVDVPRKPLFTMNRVETHLTWVILMGIALVSVAIFFMHNGFLLFRLHSYSQIFSSEVSGVALKRFFYFFIPAMLVVYFLRQDSKAWLFFLVSTVAFGLLTYMIVGGTRANIIIAFAIFLFIGIIRGWISLWMLAAAGVLGIVGMFWLALKRYGLNVSGDEAFYTFLYLTRDTFSPWENLALLLQNYHNIEFQGLAPIVRDFYVFIPTWLWPGRPSIVLNSANYFTWEVLNNHSGLAISPTLIGSLVVMGGALFIPLGAIVVGMIIKWFDWLYELGNREPNRYKAAILHSFCFGAIFNMIVLAREGLDSFVSRVVFFLVVFGASLLVAKLLFWLFDSAGLIHKRTTSLPQAQVEGKL.

11 helical membrane-spanning segments follow: residues 6–26 (FSGL…LTWF), 37–57 (VFFS…TSVL), 63–83 (VGVA…CFYG), 118–138 (VILM…NGFL), 155–175 (GVAL…VYFL), 181–201 (AWLF…MIVG), 207–227 (IIIA…ISLW), 228–248 (MLAA…LKRY), 341–361 (LVVM…GMII), 378–398 (YKAA…IVLA), and 410–430 (VFFL…FWLF).

Belongs to the WzyE family. As to quaternary structure, probably part of a complex composed of WzxE, WzyE and WzzE.

It localises to the cell inner membrane. It functions in the pathway bacterial outer membrane biogenesis; enterobacterial common antigen biosynthesis. Its function is as follows. Probably involved in the polymerization of enterobacterial common antigen (ECA) trisaccharide repeat units. This Salmonella newport (strain SL254) protein is Probable ECA polymerase.